Reading from the N-terminus, the 399-residue chain is MIITSLLDTDLYKFTMMQVVLHHFPAANVEYRFRCRTPGVDLVPYIDEIRDEVRGLCSLRFTDIELDYLRRMRFIKSDFVDFLALFHLNEKYISITPSPKGNGEIDIVIEGPWLHTILFEIPVLAIVNEVYFRNTQREPDYREGRERLREKIKLLGAKPEFADCKIADYGTRRRFSKVWHEEVALTLRDGLGPQFAGTSNVFYAMKHELTPLGTMAHEYLQACQALGPRLRDSQTYGFEMWAKEYRGDLGIALSDVYGMDAFLNDFDMYFCKLFDGARHDSGDPFEWGERMLRHYEANRCDPRTKVLVFSDALDIPKVMQLYERFRNRCKLAFGVGTNLTNDLGYVPLQIVIKMVRCNGQPVAKLSDSPGKSMCDDRAYLAYLRQVFGIAQPVDDDASQ.

Residue His-217 is modified to Phosphohistidine; by autocatalysis.

The protein belongs to the NAPRTase family. In terms of processing, transiently phosphorylated on a His residue during the reaction cycle. Phosphorylation strongly increases the affinity for substrates and increases the rate of nicotinate D-ribonucleotide production. Dephosphorylation regenerates the low-affinity form of the enzyme, leading to product release.

It catalyses the reaction nicotinate + 5-phospho-alpha-D-ribose 1-diphosphate + ATP + H2O = nicotinate beta-D-ribonucleotide + ADP + phosphate + diphosphate. It functions in the pathway cofactor biosynthesis; NAD(+) biosynthesis; nicotinate D-ribonucleotide from nicotinate: step 1/1. Functionally, catalyzes the synthesis of beta-nicotinate D-ribonucleotide from nicotinate and 5-phospho-D-ribose 1-phosphate at the expense of ATP. The sequence is that of Nicotinate phosphoribosyltransferase from Burkholderia ambifaria (strain MC40-6).